The sequence spans 446 residues: Na(+)-translocating NADH-quinone reductase subunit A (446 aa).

This sequence belongs to the NqrA family. As to quaternary structure, composed of six subunits; NqrA, NqrB, NqrC, NqrD, NqrE and NqrF.

It carries out the reaction a ubiquinone + n Na(+)(in) + NADH + H(+) = a ubiquinol + n Na(+)(out) + NAD(+). Its function is as follows. NQR complex catalyzes the reduction of ubiquinone-1 to ubiquinol by two successive reactions, coupled with the transport of Na(+) ions from the cytoplasm to the periplasm. NqrA to NqrE are probably involved in the second step, the conversion of ubisemiquinone to ubiquinol. The polypeptide is Na(+)-translocating NADH-quinone reductase subunit A (Aliivibrio salmonicida (strain LFI1238) (Vibrio salmonicida (strain LFI1238))).